The sequence spans 216 residues: Ribosomal RNA small subunit methyltransferase G (216 aa).

Residues Gly86, Leu91, 137–138 (VE), and Arg155 contribute to the S-adenosyl-L-methionine site.

Belongs to the methyltransferase superfamily. RNA methyltransferase RsmG family.

The protein localises to the cytoplasm. It catalyses the reaction guanosine(527) in 16S rRNA + S-adenosyl-L-methionine = N(7)-methylguanosine(527) in 16S rRNA + S-adenosyl-L-homocysteine. Specifically methylates the N7 position of guanine in position 527 of 16S rRNA. The polypeptide is Ribosomal RNA small subunit methyltransferase G (Lawsonia intracellularis (strain PHE/MN1-00)).